The sequence spans 136 residues: Probable disulfide formation protein (136 aa).

Residues 7 to 26 (NNALYFAWLICSTGTVMSIY) traverse the membrane as a helical segment. Cysteine 36 and cysteine 39 are joined by a disulfide. A run of 2 helical transmembrane segments spans residues 41-60 (YQRICLFPLSIILGIATYRE) and 67-84 (YALPLSITGMVIAVYQIC). Cysteine 96 and cysteine 101 form a disulfide bridge. A helical transmembrane segment spans residues 109-133 (GFITVPMASALAFCAISCLLILSGS).

It belongs to the DsbB family. BdbC subfamily.

It localises to the cell inner membrane. Its function is as follows. Required for disulfide bond formation in some proteins. This Chlamydia caviae (strain ATCC VR-813 / DSM 19441 / 03DC25 / GPIC) (Chlamydophila caviae) protein is Probable disulfide formation protein.